A 554-amino-acid chain; its full sequence is Chaperonin GroEL (554 aa).

ATP is bound by residues 30–33, Lys-51, 87–91, Gly-416, and Asp-503; these read TLGP and DGTTT.

This sequence belongs to the chaperonin (HSP60) family. Forms a cylinder of 14 subunits composed of two heptameric rings stacked back-to-back. Interacts with the co-chaperonin GroES.

It localises to the cytoplasm. It carries out the reaction ATP + H2O + a folded polypeptide = ADP + phosphate + an unfolded polypeptide.. Functionally, together with its co-chaperonin GroES, plays an essential role in assisting protein folding. The GroEL-GroES system forms a nano-cage that allows encapsulation of the non-native substrate proteins and provides a physical environment optimized to promote and accelerate protein folding. In Holospora obtusa, this protein is Chaperonin GroEL.